A 541-amino-acid polypeptide reads, in one-letter code: Propionyl-CoA carboxylase beta chain, mitochondrial (541 aa).

The transit peptide at 1–28 (MAAAIRIRAVAAGARLSVLNCGLGITTR) directs the protein to the mitochondrion. The CoA carboxyltransferase N-terminal domain maps to 34-292 (PVSVKERIDN…SSQDPAPIRE (259 aa)). Residues 34–535 (PVSVKERIDN…SKKVHRPWRK (502 aa)) are carboxyltransferase. Ser73 bears the Phosphoserine mark. Position 101 is an N6-acetyllysine; alternate (Lys101). Lys101 carries the post-translational modification N6-succinyllysine; alternate. Lys250 is modified (N6-succinyllysine). Positions 296-535 (PSDRLVPELD…SKKVHRPWRK (240 aa)) constitute a CoA carboxyltransferase C-terminal domain. The interval 327 to 360 (DEREFFEIMPSYAKNIVVGFARMNGRTVGIVGNQ) is acyl-CoA binding. 2 positions are modified to N6-acetyllysine; alternate: Lys476 and Lys491. N6-succinyllysine; alternate occurs at positions 476 and 491.

This sequence belongs to the AccD/PCCB family. In terms of assembly, the holoenzyme is a dodecamer composed of 6 PCCA/alpha subunits and 6 PCCB/beta subunits. As to expression, broadly expressed. Most abundantly expressed in the kidney, liver, small intestine and stomach.

It localises to the mitochondrion matrix. It catalyses the reaction propanoyl-CoA + hydrogencarbonate + ATP = (S)-methylmalonyl-CoA + ADP + phosphate + H(+). The catalysed reaction is butanoyl-CoA + hydrogencarbonate + ATP = (2S)-ethylmalonyl-CoA + ADP + phosphate + H(+). Its pathway is metabolic intermediate metabolism; propanoyl-CoA degradation; succinyl-CoA from propanoyl-CoA: step 1/3. This is one of the 2 subunits of the biotin-dependent propionyl-CoA carboxylase (PCC), a mitochondrial enzyme involved in the catabolism of odd chain fatty acids, branched-chain amino acids isoleucine, threonine, methionine, and valine and other metabolites. Propionyl-CoA carboxylase catalyzes the carboxylation of propionyl-CoA/propanoyl-CoA to D-methylmalonyl-CoA/(S)-methylmalonyl-CoA. Within the holoenzyme, the alpha subunit catalyzes the ATP-dependent carboxylation of the biotin carried by the biotin carboxyl carrier (BCC) domain, while the beta subunit then transfers the carboxyl group from carboxylated biotin to propionyl-CoA. Propionyl-CoA carboxylase also significantly acts on butyryl-CoA/butanoyl-CoA, which is converted to ethylmalonyl-CoA/(2S)-ethylmalonyl-CoA. Other alternative minor substrates include (2E)-butenoyl-CoA/crotonoyl-CoA. In Mus musculus (Mouse), this protein is Propionyl-CoA carboxylase beta chain, mitochondrial.